A 498-amino-acid polypeptide reads, in one-letter code: Protein WHAT'S THIS FACTOR 1, chloroplastic (498 aa).

The N-terminal 50 residues, 1–50 (MDAKLLLPFPFAPAAATRSPKSLFLGAPLPPPPRPPPFPLRLRPRPAAVV), are a transit peptide targeting the chloroplast. The PORR domain occupies 59–387 (KEAPFDTVIQ…LKEKMRALVA (329 aa)). Disordered stretches follow at residues 397-427 (VGTG…EDEG) and 446-498 (DYEW…RERW). Acidic residues-rich tracts occupy residues 417 to 427 (SDEEYDDEDEG) and 456 to 466 (ENDDSPPDFGD).

It localises to the plastid. Its subcellular location is the chloroplast. Its function is as follows. RNA-binding protein involved in the chloroplastic group II intron splicing. Binds specific group II introns and promotes their splicing. Functions in the context of a heterodimer with the ribonuclease III domain-containing protein RNC1. This is Protein WHAT'S THIS FACTOR 1, chloroplastic from Zea mays (Maize).